Consider the following 969-residue polypeptide: RNA polymerase-associated protein RapA (969 aa).

The region spanning 164 to 334 (EVGRRYAPRV…FARLRLLDPD (171 aa)) is the Helicase ATP-binding domain. 177–184 (DEVGLGKT) is an ATP binding site. The DEAH box motif lies at 280–283 (DEAH). The Helicase C-terminal domain occupies 492–672 (RVNWLLELLK…GLEPLIEESA (181 aa)).

It belongs to the SNF2/RAD54 helicase family. RapA subfamily. In terms of assembly, interacts with the RNAP. Has a higher affinity for the core RNAP than for the holoenzyme. Its ATPase activity is stimulated by binding to RNAP.

Its function is as follows. Transcription regulator that activates transcription by stimulating RNA polymerase (RNAP) recycling in case of stress conditions such as supercoiled DNA or high salt concentrations. Probably acts by releasing the RNAP, when it is trapped or immobilized on tightly supercoiled DNA. Does not activate transcription on linear DNA. Probably not involved in DNA repair. This Aliivibrio salmonicida (strain LFI1238) (Vibrio salmonicida (strain LFI1238)) protein is RNA polymerase-associated protein RapA.